We begin with the raw amino-acid sequence, 20 residues long: VKVYNQFGTKVELGVSMRIF.

It localises to the cell outer membrane. The sequence is that of 39 kDa major outer membrane protein from Aggregatibacter actinomycetemcomitans (Actinobacillus actinomycetemcomitans).